We begin with the raw amino-acid sequence, 795 residues long: Glycerol-3-phosphate acyltransferase 2, mitochondrial (795 aa).

The disordered stretch occupies residues 1-21 (MATMLEGRCQTQPRSSPSGRE). The Cytoplasmic segment spans residues 1 to 305 (MATMLEGRCQ…LGPRLSALGQ (305 aa)). A compositionally biased stretch (polar residues) spans 9–18 (CQTQPRSSPS). The tract at residues 180-331 (QLHKGQMKMV…DALLVPVAVT (152 aa)) is acyltransferase. Residues 205–210 (HKTLLD) carry the HXXXXD motif motif. The chain crosses the membrane as a helical span at residues 306 to 332 (AWVGFVVQAVQVGIVPDALLVPVAVTY). Residues 333–449 (DLVPDAPCDI…QLLVRRLSCH (117 aa)) lie on the Mitochondrial intermembrane side of the membrane. Residues 450–472 (VLSASVGSSAVMSTAIMATLLLF) traverse the membrane as a helical segment. Over 473 to 795 (KHQKLLGEFS…EQFIRQFICS (323 aa)) the chain is Cytoplasmic. Serine 656 carries the post-translational modification Phosphoserine. Threonine 660 carries the phosphothreonine modification. Serine 662 and serine 664 each carry phosphoserine.

It belongs to the GPAT/DAPAT family. Interacts with PIWIL2.

The protein localises to the mitochondrion outer membrane. It carries out the reaction sn-glycerol 3-phosphate + an acyl-CoA = a 1-acyl-sn-glycero-3-phosphate + CoA. The catalysed reaction is a 1-acyl-sn-glycero-3-phosphate + an acyl-CoA = a 1,2-diacyl-sn-glycero-3-phosphate + CoA. It catalyses the reaction 1-(9Z-octadecenoyl)-sn-glycero-3-phosphate + (9Z)-octadecenoyl-CoA = 1,2-di-(9Z-octadecenoyl)-sn-glycero-3-phosphate + CoA. The enzyme catalyses 1-(9Z-octadecenoyl)-sn-glycero-3-phosphate + (5Z,8Z,11Z,14Z)-eicosatetraenoyl-CoA = 1-(9Z)-octadecenoyl-2-(5Z,8Z,11Z,14Z)-eicosatetraenoyl-sn-glycero-3-phosphate + CoA. It carries out the reaction (5Z,8Z,11Z,14Z)-eicosatetraenoyl-CoA + sn-glycerol 3-phosphate = 1-(5Z,8Z,11Z,14Z-eicosatetraenoyl)-sn-glycero-3-phosphate + CoA. It functions in the pathway phospholipid metabolism; CDP-diacylglycerol biosynthesis; CDP-diacylglycerol from sn-glycerol 3-phosphate: step 1/3. Its activity is regulated as follows. Inhibited by N-ethylmaleimide (NEM). Functionally, transfers an acyl-group from acyl-ACP to the sn-1 position of glycerol-3-phosphate producing a lysophosphatidic acid (LPA), an essential step for the triacylglycerol (TAG) and glycerophospholipids. In vitro also transfers an acyl-group from acyl-ACP to the LPA producing a phosphatidic acid (PA). Prefers arachidonoyl-CoA as the acyl donor. Required for primary processing step during piRNA biosynthesis. Molecular mechanisms by which it promotes piRNA biosynthesis are unclear and do not involve its acyltransferase activity. This Homo sapiens (Human) protein is Glycerol-3-phosphate acyltransferase 2, mitochondrial.